A 335-amino-acid polypeptide reads, in one-letter code: Holliday junction branch migration complex subunit RuvB (335 aa).

Positions 1-181 (MTRILDNDLI…FGITGHMEYY (181 aa)) are large ATPase domain (RuvB-L). ATP-binding positions include leucine 20, arginine 21, glycine 62, lysine 65, threonine 66, threonine 67, 128-130 (EDF), arginine 171, tyrosine 181, and arginine 218. Threonine 66 provides a ligand contact to Mg(2+). A small ATPAse domain (RuvB-S) region spans residues 182 to 252 (QTADLTEIVE…ITDKALTMLD (71 aa)). Residues 255-335 (QEGLDYVDQK…GYPYEKTIKT (81 aa)) form a head domain (RuvB-H) region. Arginine 291, arginine 310, arginine 312, and arginine 315 together coordinate DNA.

This sequence belongs to the RuvB family. As to quaternary structure, homohexamer. Forms an RuvA(8)-RuvB(12)-Holliday junction (HJ) complex. HJ DNA is sandwiched between 2 RuvA tetramers; dsDNA enters through RuvA and exits via RuvB. An RuvB hexamer assembles on each DNA strand where it exits the tetramer. Each RuvB hexamer is contacted by two RuvA subunits (via domain III) on 2 adjacent RuvB subunits; this complex drives branch migration. In the full resolvosome a probable DNA-RuvA(4)-RuvB(12)-RuvC(2) complex forms which resolves the HJ.

The protein localises to the cytoplasm. It catalyses the reaction ATP + H2O = ADP + phosphate + H(+). Its function is as follows. The RuvA-RuvB-RuvC complex processes Holliday junction (HJ) DNA during genetic recombination and DNA repair, while the RuvA-RuvB complex plays an important role in the rescue of blocked DNA replication forks via replication fork reversal (RFR). RuvA specifically binds to HJ cruciform DNA, conferring on it an open structure. The RuvB hexamer acts as an ATP-dependent pump, pulling dsDNA into and through the RuvAB complex. RuvB forms 2 homohexamers on either side of HJ DNA bound by 1 or 2 RuvA tetramers; 4 subunits per hexamer contact DNA at a time. Coordinated motions by a converter formed by DNA-disengaged RuvB subunits stimulates ATP hydrolysis and nucleotide exchange. Immobilization of the converter enables RuvB to convert the ATP-contained energy into a lever motion, pulling 2 nucleotides of DNA out of the RuvA tetramer per ATP hydrolyzed, thus driving DNA branch migration. The RuvB motors rotate together with the DNA substrate, which together with the progressing nucleotide cycle form the mechanistic basis for DNA recombination by continuous HJ branch migration. Branch migration allows RuvC to scan DNA until it finds its consensus sequence, where it cleaves and resolves cruciform DNA. This Streptococcus equi subsp. equi (strain 4047) protein is Holliday junction branch migration complex subunit RuvB.